We begin with the raw amino-acid sequence, 388 residues long: Succinate--CoA ligase [ADP-forming] subunit beta (388 aa).

Residues 9 to 243 (KQLFHRYGIP…ESQLAPLEVR (235 aa)) form the ATP-grasp domain. ATP contacts are provided by residues K45, 52–54 (GRG), E98, V101, and E106. N198 and D212 together coordinate Mg(2+). Residues N263 and 320–322 (GIM) each bind substrate.

Belongs to the succinate/malate CoA ligase beta subunit family. In terms of assembly, heterotetramer of two alpha and two beta subunits. The cofactor is Mg(2+).

It catalyses the reaction succinate + ATP + CoA = succinyl-CoA + ADP + phosphate. The catalysed reaction is GTP + succinate + CoA = succinyl-CoA + GDP + phosphate. Its pathway is carbohydrate metabolism; tricarboxylic acid cycle; succinate from succinyl-CoA (ligase route): step 1/1. Succinyl-CoA synthetase functions in the citric acid cycle (TCA), coupling the hydrolysis of succinyl-CoA to the synthesis of either ATP or GTP and thus represents the only step of substrate-level phosphorylation in the TCA. The beta subunit provides nucleotide specificity of the enzyme and binds the substrate succinate, while the binding sites for coenzyme A and phosphate are found in the alpha subunit. In Syntrophotalea carbinolica (strain DSM 2380 / NBRC 103641 / GraBd1) (Pelobacter carbinolicus), this protein is Succinate--CoA ligase [ADP-forming] subunit beta.